The sequence spans 229 residues: Adenylate kinase 1 (229 aa).

42-47 (GCGKGT) serves as a coordination point for ATP. The residue at position 62 (S62) is a Phosphoserine. AMP is bound by residues S63, R68, 118–121 (GYPR), and Q125. An ATP-binding site is contributed by R156. Positions 164 and 175 each coordinate AMP.

This sequence belongs to the adenylate kinase family. AK1 subfamily. As to expression, high expression levels in the thorax, suggesting a possible function in the gastrointestinal or reproductive systems.

Its subcellular location is the cytoplasm. The catalysed reaction is AMP + ATP = 2 ADP. In terms of biological role, catalyzes the reversible transfer of the terminal phosphate group between ATP and AMP. Plays an important role in cellular energy homeostasis and in adenine nucleotide metabolism. In Drosophila melanogaster (Fruit fly), this protein is Adenylate kinase 1.